A 167-amino-acid polypeptide reads, in one-letter code: Heme-degrading monooxygenase (167 aa).

Positions 1-50 are important for catalysis; that stretch reads MKKVFITTGTEHYLRQLMANYTGGNVTLLQNFSQSLLYQESTGEKLFQEG. In terms of domain architecture, ABM spans 67–154; sequence VVVFEYIHLR…NNTQSGFSHE (88 aa).

It belongs to the antibiotic biosynthesis monooxygenase family. In terms of assembly, monomer.

The protein localises to the cytoplasm. Catalyzes the degradation of heme to biliverdin in the presence of a suitable electron donor such as ascorbate, with the subsequent release of iron. Hardly any CO is released by the heme degradation reaction. Binds heme. Allows bacterial pathogens to use the host heme as an iron source. Release of iron from heme may play a crucial role in the pathogenicity of L.monocytogenes. The chain is Heme-degrading monooxygenase from Listeria monocytogenes serovar 1/2a (strain ATCC BAA-679 / EGD-e).